A 782-amino-acid chain; its full sequence is Large T antigen (782 aa).

An N-acetylmethionine; by host modification is found at methionine 1. Residues 12–75 enclose the J domain; it reads RLLELLKLPR…VYNLRMNLGG (64 aa). Disordered stretches follow at residues 74-97 and 145-291; these read GGTG…GHSP and YEEP…APSD. The span at 85–97 shows a compositional bias: basic and acidic residues; sequence TAERGTEESGHSP. The LXCXE motif motif lies at 142 to 146; that stretch reads LFCYE. Positions 148 to 161 are enriched in low complexity; it reads PLLSPNPSSPTDTP. The segment covering 199–209 has biased composition (gly residues); the sequence is ATGGGGGGVHA. 2 stretches are compositionally biased toward low complexity: residues 233–247 and 264–274; these read SQGG…DSSG and ESYSQSCSQSS. At threonine 278 the chain carries Phosphothreonine; by host. The Nuclear localization signal signature appears at 279–286; it reads PPKKARED. Residues 293–407 constitute a DNA-binding region (T-ag OBD); sequence PSSLTGYLSH…TENKPGLHQF (115 aa). The T-ag D1-type zinc-finger motif lies at 416–510; the sequence is QKAVDWIMVA…RRLKLVECTR (95 aa). The Zn(2+) site is built by cysteine 453, cysteine 456, histidine 466, and histidine 470. An SF3 helicase domain is found at 549 to 709; sequence DFPQTLFKML…PHLAQSLEKC (161 aa). ATP is bound at residue 575–582; sequence GPVNSGKT.

Forms homohexamers in the presence of ATP. Interacts with host HDAC1. Interacts (via LXCXE domain) with host RB1; the interaction induces the aberrant dissociation of RB1-E2F1 complex thereby disrupting RB1's activity. Interacts (via LXCXE domain) with host pRB-related proteins RBL1 and RBL2. Interacts (via C-terminus) with host TOP1 and POLA1 allowing DNA replication. Interacts with host preinitiation complex components TBP, TFIIA and TFIID to regulate transcription initiation. Requires Mg(2+) as cofactor. In terms of processing, phosphorylated on both serine and threonine residues. Small t antigen inhibits the dephosphorylation by the AC form of PP2A. Post-translationally, O-Glycosylated near the C-terminal region. Acetylated by CBP in a TP53-dependent manner.

It localises to the host nucleus. The catalysed reaction is Couples ATP hydrolysis with the unwinding of duplex DNA by translocating in the 3'-5' direction.. It catalyses the reaction ATP + H2O = ADP + phosphate + H(+). In terms of biological role, isoform large T antigen is a key early protein essential for both driving viral replication and inducing cellular transformation. Plays a role in viral genome replication by driving entry of quiescent cells into the cell cycle and by autoregulating the synthesis of viral early mRNA. Displays highly oncogenic activities by corrupting the host cellular checkpoint mechanisms that guard cell division and the transcription, replication, and repair of DNA. Participates in the modulation of cellular gene expression preceeding viral DNA replication. This step involves binding to host key cell cycle regulators retinoblastoma protein RB1/pRb and TP53. Induces the disassembly of host E2F1 transcription factors from RB1, thus promoting transcriptional activation of E2F1-regulated S-phase genes. Inhibits host TP53 binding to DNA, abrogating the ability of TP53 to stimulate gene expression. Plays the role of a TFIID-associated factor (TAF) in transcription initiation for all three RNA polymerases, by stabilizing the TBP-TFIIA complex on promoters. Initiates viral DNA replication and unwinding via interactions with the viral origin of replication. Binds two adjacent sites in the SV40 origin. The replication fork movement is facilitated by Large T antigen helicase activity. Has processive 3'-5' DNA helicase activity which requires a short 3' single-stranded region and ATP. Activates the transcription of viral late mRNA, through host TBP and TFIIA stabilization. Interferes with histone deacetylation mediated by HDAC1, leading to activation of transcription. This chain is Large T antigen, found in Mus musculus (Mouse).